We begin with the raw amino-acid sequence, 257 residues long: Dihydroorotate dehydrogenase B (NAD(+)), electron transfer subunit (257 aa).

Residues 2 to 102 (MKQEQMTVVR…LGPLGNGFPL (101 aa)) form the FAD-binding FR-type domain. FAD is bound by residues 53 to 56 (RPLS), 70 to 72 (IYR), and 77 to 78 (GT). [2Fe-2S] cluster contacts are provided by cysteine 221, cysteine 226, cysteine 229, and cysteine 244.

Belongs to the PyrK family. Heterotetramer of 2 PyrK and 2 PyrD type B subunits. [2Fe-2S] cluster serves as cofactor. Requires FAD as cofactor.

It functions in the pathway pyrimidine metabolism; UMP biosynthesis via de novo pathway; orotate from (S)-dihydroorotate (NAD(+) route): step 1/1. Its function is as follows. Responsible for channeling the electrons from the oxidation of dihydroorotate from the FMN redox center in the PyrD type B subunit to the ultimate electron acceptor NAD(+). The sequence is that of Dihydroorotate dehydrogenase B (NAD(+)), electron transfer subunit from Geobacillus sp. (strain WCH70).